Consider the following 110-residue polypeptide: uncharacterized protein (110 aa).

Its function is as follows. May play a regulatory role in sulfomenaquinone (SMK) biosynthesis. This is an uncharacterized protein from Mycobacterium bovis (strain ATCC BAA-935 / AF2122/97).